Here is a 653-residue protein sequence, read N- to C-terminus: Probable sulfate transporter 3.4 (653 aa).

The Cytoplasmic segment spans residues 1–92 (MGHGTNRVED…QYDLKLLRSD (92 aa)). Residues 93 to 113 (VISGLTIASLAIPQGISYAKL) form a helical membrane-spanning segment. Residues 114–115 (AN) lie on the Extracellular side of the membrane. Residues 116–136 (LPPIVGLYSSFVPPLIYAVLG) form a helical membrane-spanning segment. At 137–140 (SSRH) the chain is on the cytoplasmic side. Residues 141 to 161 (LAVGPVSIASLVMGSMLSESV) form a helical membrane-spanning segment. The Extracellular portion of the chain corresponds to 162-167 (SPTQDS). Residues 168 to 188 (ILYLKLAFTSTFFAGVFQASL) traverse the membrane as a helical segment. At 189 to 194 (GLLRLG) the chain is on the cytoplasmic side. Residues 195–215 (FMIDFLSKATLIGFTAGAAVI) form a helical membrane-spanning segment. At 216 to 247 (VSLQQLKGLLGIVHFTGKMQIVPVMSSVFNHR) the chain is on the extracellular side. Residues 248–268 (SEWSWETIVMGIGFLSILLTT) form a helical membrane-spanning segment. The Cytoplasmic segment spans residues 269–279 (RHISMRKPKLF). The helical transmembrane segment at 280-300 (WISAASPLASVIISTLLVYLI) threads the bilayer. Residues 301–331 (RSKTHAISFIGHLPKGLNPPSLNMLYFSGAH) are Extracellular-facing. A helical membrane pass occupies residues 332–352 (LALAIKTGIITGILSLTEGIA). Residues 353-370 (VGRTFASLKNYQVNGNKE) are Cytoplasmic-facing. A helical transmembrane segment spans residues 371 to 391 (MMAIGFMNMAGSCTSCYVTTG). Over 392–407 (SFSRSAVNYNAGAKTA) the chain is Extracellular. The helical transmembrane segment at 408–428 (VSNIVMASAVLVTLLFLMPLF) threads the bilayer. The Cytoplasmic portion of the chain corresponds to 429-433 (YYTPN). Residues 434–454 (VILAAIILTAVIGLIDYQAAY) form a helical membrane-spanning segment. Residues 455-471 (KLWKVDKFDFFTCLCSF) are Extracellular-facing. A helical transmembrane segment spans residues 472-492 (FGVLFVSVPLGLAIAVAVSVI). Residues 493 to 653 (KILLHVTRPN…SSTWKANGQP (161 aa)) lie on the Cytoplasmic side of the membrane. The region spanning 520-643 (RYREASRIPG…LTVGEAVADL (124 aa)) is the STAS domain.

Belongs to the SLC26A/SulP transporter (TC 2.A.53) family.

Its subcellular location is the membrane. In terms of biological role, h(+)/sulfate cotransporter that may play a role in the regulation of sulfate assimilation. The sequence is that of Probable sulfate transporter 3.4 (SULTR3;4) from Arabidopsis thaliana (Mouse-ear cress).